We begin with the raw amino-acid sequence, 319 residues long: Lambda-crystallin (319 aa).

Residue Ala-2 is modified to N-acetylalanine. Position 3 is a phosphoserine (Ser-3). NAD(+)-binding positions include 16–17 (LV), Asp-36, Glu-97, and Lys-102. A Phosphoserine modification is found at Ser-111.

This sequence belongs to the 3-hydroxyacyl-CoA dehydrogenase family. In terms of assembly, homodimer. Detected in eye lens, kidney, liver, heart, lung, brain and testis.

The protein resides in the cytoplasm. It catalyses the reaction L-gulonate + NAD(+) = 3-dehydro-L-gulonate + NADH + H(+). With respect to regulation, inhibited by malonate and by inorganic phosphate. Functionally, functions as a crystallin in the rabbit eye lens. Has high L-gulonate 3-dehydrogenase activity. It also exhibits low dehydrogenase activity toward L-3-hydroxybutyrate (HBA) and L-threonate. The protein is Lambda-crystallin (CRYL1) of Oryctolagus cuniculus (Rabbit).